Reading from the N-terminus, the 160-residue chain is Putative oxygenase ATEG_00330 (160 aa).

The region spanning 24–100 (HYFGTALHAK…RNIAADPEFA (77 aa)) is the EthD domain.

Belongs to the tpcK family.

Functionally, putative oxygenase; part of the gene cluster that mediates the biosynthesis of isoflavipucine. The PKS part of the PKS-NRPS ATEG_00325 probably assembles a triketide from an acetyl starter and two malonyl-CoA extender units. The poly-beta-keto intermediate would then be fused to the leucine unit by the NRPS part. The resulting amide would be liberated from the PKS-NRPS through reductive release of the linear PKS-NRPS product from the enzyme complex. Further steps in isoflapucine synthesis include a cyclization step, an oxidation step, a hydrolysis step involving a trans-amidation, and an additional oxidation step, leading to flavipucine. Formation of isoflavipucine from flavipucine requires an unusual rearrangement. Alternative rearrangement reactions could build up rubrobramide, representing a branching of flavipucine biosynthesis. The enzymes involved in the post-PKS-NRPS steps have not been identified yet, but the putative oxygenases ATEG_003329 and ATEG_00330 encoded by the cluster could play a role. The chain is Putative oxygenase ATEG_00330 from Aspergillus terreus (strain NIH 2624 / FGSC A1156).